Reading from the N-terminus, the 78-residue chain is Large ribosomal subunit protein bL28 (78 aa).

It belongs to the bacterial ribosomal protein bL28 family.

The protein is Large ribosomal subunit protein bL28 of Parasynechococcus marenigrum (strain WH8102).